A 248-amino-acid chain; its full sequence is Flagellar L-ring protein (248 aa).

A signal peptide spans 1-23 (MRHAFRHSVRTLGLLGLLPVLSA). Cysteine 24 carries N-palmitoyl cysteine lipidation. Cysteine 24 carries S-diacylglycerol cysteine lipidation.

Belongs to the FlgH family. As to quaternary structure, the basal body constitutes a major portion of the flagellar organelle and consists of four rings (L,P,S, and M) mounted on a central rod.

Its subcellular location is the cell outer membrane. The protein resides in the bacterial flagellum basal body. In terms of biological role, assembles around the rod to form the L-ring and probably protects the motor/basal body from shearing forces during rotation. This is Flagellar L-ring protein from Gluconobacter oxydans (strain 621H) (Gluconobacter suboxydans).